Reading from the N-terminus, the 67-residue chain is DNA gyrase inhibitor YacG (67 aa).

Residues C10, C13, C29, and C33 each contribute to the Zn(2+) site. A compositionally biased stretch (basic and acidic residues) spans 44–57 (EEKRIPSSGDRSDT). The interval 44-67 (EEKRIPSSGDRSDTDGWSEEENQP) is disordered.

This sequence belongs to the DNA gyrase inhibitor YacG family. In terms of assembly, interacts with GyrB. Requires Zn(2+) as cofactor.

Inhibits all the catalytic activities of DNA gyrase by preventing its interaction with DNA. Acts by binding directly to the C-terminal domain of GyrB, which probably disrupts DNA binding by the gyrase. In Cronobacter sakazakii (strain ATCC BAA-894) (Enterobacter sakazakii), this protein is DNA gyrase inhibitor YacG.